Consider the following 552-residue polypeptide: uncharacterized protein (552 aa).

The segment at 1–59 is disordered; it reads MPLEKTNTHDSTATVEDQEATDNPMHLTQSRMLDLAGNPNRTTSRQSETLFPNGVDLNY. Positions 39–50 are enriched in polar residues; that stretch reads PNRTTSRQSETL. The next 12 helical transmembrane spans lie at 116–136, 158–178, 181–201, 203–223, 238–258, 271–291, 345–365, 383–403, 424–444, 450–470, 484–506, and 519–539; these read ITIVNSLLVVCSAFGSSVIAG, LMVVGFGIGPLVISPLSEMIG, IVYLVTLMIYIVLQIPCALAP, IACLLIVRFFCGCFGCTPLTL, GLAIAFFAAGPYAGPTLGPLV, WIFWVNMIYMFVMYLTLLPVP, ILVCISGYIALIYALLYGYFF, GLMFIPILVGVVGALSTTPFL, LVGMCIASPFIPTGLLIFAWT, IWIGPAFSGAPFGYGMVLFYF, CASALAAKTMVRSAGGAAFPLFI, and FFLLGMVAVAAIPIPFTFYLF.

Belongs to the major facilitator superfamily.

The protein localises to the membrane. This is an uncharacterized protein from Schizosaccharomyces pombe (strain 972 / ATCC 24843) (Fission yeast).